A 223-amino-acid chain; its full sequence is Urease accessory protein UreF (223 aa).

It belongs to the UreF family. UreD, UreF and UreG form a complex that acts as a GTP-hydrolysis-dependent molecular chaperone, activating the urease apoprotein by helping to assemble the nickel containing metallocenter of UreC. The UreE protein probably delivers the nickel.

The protein resides in the cytoplasm. In terms of biological role, required for maturation of urease via the functional incorporation of the urease nickel metallocenter. This Rhizobium etli (strain ATCC 51251 / DSM 11541 / JCM 21823 / NBRC 15573 / CFN 42) protein is Urease accessory protein UreF.